The primary structure comprises 196 residues: uncharacterized protein (196 aa).

The interval 1-21 (MQPEVEPLISPNLGAPGSHRE) is disordered.

This is an uncharacterized protein from Mus musculus (Mouse).